The chain runs to 177 residues: Photosystem I assembly protein Ycf4 (177 aa).

Helical transmembrane passes span 20–40 and 60–80; these read VALL…SSYF and LVMG…WAVI.

It belongs to the Ycf4 family.

It localises to the cellular thylakoid membrane. Seems to be required for the assembly of the photosystem I complex. The protein is Photosystem I assembly protein Ycf4 of Synechococcus sp. (strain RCC307).